The following is an 82-amino-acid chain: DNA gyrase inhibitor YacG (82 aa).

Cys9, Cys12, Cys27, and Cys31 together coordinate Zn(2+). Residues 44 to 82 (IGLPHEGDPGDAPVEYLDDRDLTQPSPERQNESFHRYSE) are disordered. Over residues 72 to 82 (RQNESFHRYSE) the composition is skewed to basic and acidic residues.

This sequence belongs to the DNA gyrase inhibitor YacG family. As to quaternary structure, interacts with GyrB. It depends on Zn(2+) as a cofactor.

In terms of biological role, inhibits all the catalytic activities of DNA gyrase by preventing its interaction with DNA. Acts by binding directly to the C-terminal domain of GyrB, which probably disrupts DNA binding by the gyrase. The polypeptide is DNA gyrase inhibitor YacG (Rhodopirellula baltica (strain DSM 10527 / NCIMB 13988 / SH1)).